A 295-amino-acid chain; its full sequence is Probable endonuclease 4 (295 aa).

Positions 78, 118, 154, 188, 191, 225, 238, 240, and 270 each coordinate Zn(2+).

Belongs to the AP endonuclease 2 family. Zn(2+) is required as a cofactor.

It catalyses the reaction Endonucleolytic cleavage to 5'-phosphooligonucleotide end-products.. Functionally, endonuclease IV plays a role in DNA repair. It cleaves phosphodiester bonds at apurinic or apyrimidinic (AP) sites, generating a 3'-hydroxyl group and a 5'-terminal sugar phosphate. In Vibrio campbellii (strain ATCC BAA-1116), this protein is Probable endonuclease 4.